Consider the following 85-residue polypeptide: Cell division topological specificity factor (85 aa).

This sequence belongs to the MinE family.

Functionally, prevents the cell division inhibition by proteins MinC and MinD at internal division sites while permitting inhibition at polar sites. This ensures cell division at the proper site by restricting the formation of a division septum at the midpoint of the long axis of the cell. This Shewanella oneidensis (strain ATCC 700550 / JCM 31522 / CIP 106686 / LMG 19005 / NCIMB 14063 / MR-1) protein is Cell division topological specificity factor.